We begin with the raw amino-acid sequence, 245 residues long: Eukaryotic translation initiation factor 6 (245 aa).

It belongs to the eIF-6 family. In terms of assembly, monomer. Associates with the 60S ribosomal subunit.

The protein localises to the cytoplasm. It localises to the nucleus. It is found in the nucleolus. In terms of biological role, binds to the 60S ribosomal subunit and prevents its association with the 40S ribosomal subunit to form the 80S initiation complex in the cytoplasm. May also be involved in ribosome biogenesis. The chain is Eukaryotic translation initiation factor 6 from Drosophila melanogaster (Fruit fly).